The chain runs to 721 residues: K(+)-insensitive pyrophosphate-energized proton pump (721 aa).

Transmembrane regions (helical) follow at residues 8 to 28 (LLGV…AVWV), 57 to 77 (YRTL…AIDM), 82 to 102 (FGLT…AGYL), 136 to 156 (VMGL…YLVF), and 168 to 188 (LVAL…GGGI). Position 191 (Lys-191) interacts with substrate. Residues Asp-194, Asp-198, Asn-221, and Asp-224 each contribute to the Mg(2+) site. 5 consecutive transmembrane segments (helical) span residues 247–267 (AIFL…IILF), 294–314 (ISLA…IGAF), 323–343 (ALAL…IVKI), 374–394 (YGVG…VLGI), and 416–436 (AGIF…GIII). Asp-446 serves as a coordination point for Mg(2+). 4 helical membrane passes run 483-503 (AIAS…FEIV), 527-547 (LINA…YFFS), 599-619 (FLIP…LLGW), and 621-641 (ALAG…LLMA). 3 residues coordinate Ca(2+): Asp-648, Asp-672, and Asp-676. Lys-679 serves as a coordination point for substrate. Residues 698 to 718 (VVFTYVIVSTNIALGIWPSGL) form a helical membrane-spanning segment.

The protein belongs to the H(+)-translocating pyrophosphatase (TC 3.A.10) family. K(+)-insensitive subfamily. Homodimer. It depends on Mg(2+) as a cofactor.

The protein localises to the cell membrane. It catalyses the reaction diphosphate + H2O + H(+)(in) = 2 phosphate + 2 H(+)(out). Functionally, proton pump that utilizes the energy of pyrophosphate hydrolysis as the driving force for proton movement across the membrane. Generates a proton motive force. In Pyrobaculum aerophilum (strain ATCC 51768 / DSM 7523 / JCM 9630 / CIP 104966 / NBRC 100827 / IM2), this protein is K(+)-insensitive pyrophosphate-energized proton pump.